The primary structure comprises 101 residues: Large ribosomal subunit protein bL21 (101 aa).

This sequence belongs to the bacterial ribosomal protein bL21 family. In terms of assembly, part of the 50S ribosomal subunit. Contacts protein L20.

This protein binds to 23S rRNA in the presence of protein L20. The chain is Large ribosomal subunit protein bL21 from Sulfurovum sp. (strain NBC37-1).